Consider the following 401-residue polypeptide: Imidazolonepropionase (401 aa).

Fe(3+) contacts are provided by histidine 70 and histidine 72. Residues histidine 70 and histidine 72 each contribute to the Zn(2+) site. 4-imidazolone-5-propanoate-binding residues include arginine 79, tyrosine 142, and histidine 175. Tyrosine 142 serves as a coordination point for N-formimidoyl-L-glutamate. A Fe(3+)-binding site is contributed by histidine 240. Zn(2+) is bound at residue histidine 240. Glutamine 243 is a binding site for 4-imidazolone-5-propanoate. Aspartate 315 serves as a coordination point for Fe(3+). Aspartate 315 provides a ligand contact to Zn(2+). N-formimidoyl-L-glutamate-binding residues include asparagine 317 and glycine 319. Threonine 320 provides a ligand contact to 4-imidazolone-5-propanoate.

The protein belongs to the metallo-dependent hydrolases superfamily. HutI family. Requires Zn(2+) as cofactor. It depends on Fe(3+) as a cofactor.

The protein localises to the cytoplasm. It catalyses the reaction 4-imidazolone-5-propanoate + H2O = N-formimidoyl-L-glutamate. It functions in the pathway amino-acid degradation; L-histidine degradation into L-glutamate; N-formimidoyl-L-glutamate from L-histidine: step 3/3. Functionally, catalyzes the hydrolytic cleavage of the carbon-nitrogen bond in imidazolone-5-propanoate to yield N-formimidoyl-L-glutamate. It is the third step in the universal histidine degradation pathway. This is Imidazolonepropionase from Caulobacter vibrioides (strain ATCC 19089 / CIP 103742 / CB 15) (Caulobacter crescentus).